We begin with the raw amino-acid sequence, 202 residues long: Small ribosomal subunit protein uS4 (202 aa).

A disordered region spans residues 22 to 43; it reads TRKSARRAYPPGQHGQNRKKRS. Residues 90 to 152 enclose the S4 RNA-binding domain; the sequence is MRLDNTVFRL…APSRKLVENN (63 aa).

Belongs to the universal ribosomal protein uS4 family. In terms of assembly, part of the 30S ribosomal subunit. Contacts protein S5. The interaction surface between S4 and S5 is involved in control of translational fidelity.

One of the primary rRNA binding proteins, it binds directly to 16S rRNA where it nucleates assembly of the body of the 30S subunit. Functionally, with S5 and S12 plays an important role in translational accuracy. The polypeptide is Small ribosomal subunit protein uS4 (Trichormus variabilis (strain ATCC 29413 / PCC 7937) (Anabaena variabilis)).